Here is a 411-residue protein sequence, read N- to C-terminus: MDAIILCAGKGTRLHPITESRPKPMIPIAGKPILEHIIEKIENHVEKIYLVVGFEKEKIIEYFNENPKIEYILQEKQLGTGHAVLTAKNFIKDDFLVLNGDVIFEDSIDEILDYENAVALSKVDNPENFGVIELGYDNKVINLLEKPKKEELTSNFINAGIYKLQNSVFGILENLVPSERGEIELTDALKKLIEIGKLHGVELNGYWNDIGHPWDVLSANSHFLNKIISKISGKIENNVSITGNVIIEEGAVIKSNSVIEGPVIIKSGSIVGPLAYIRPNTILMENNFVGNSSEIKGSIIFENTKIPHLSYVGDSIIGANCNFGCNTITANLRFDNKPVIVNIKGKPVKSVRKLGAIIGDNVKSGIQVSFMPGVKIGSNSLIGANCLIDSDIEQESFVYKKDELVITKKRN.

The tract at residues 1 to 204 (MDAIILCAGK…IGKLHGVELN (204 aa)) is pyrophosphorylase. Residues 6 to 9 (LCAG), Gln74, and Gly79 each bind UTP. N-acetyl-alpha-D-glucosamine 1-phosphate is bound by residues Thr80, Gly130, Asn142, and Asn158. The interval 205–224 (GYWNDIGHPWDVLSANSHFL) is linker. Residues 225–411 (NKIISKISGK…DELVITKKRN (187 aa)) are N-acetyltransferase. The active-site Proton acceptor is the His308. Acetyl-CoA-binding residues include Ala384 and Lys401.

This sequence in the N-terminal section; belongs to the N-acetylglucosamine-1-phosphate uridyltransferase family. It in the C-terminal section; belongs to the transferase hexapeptide repeat family.

The enzyme catalyses N-acetyl-alpha-D-glucosamine 1-phosphate + UTP + H(+) = UDP-N-acetyl-alpha-D-glucosamine + diphosphate. The catalysed reaction is alpha-D-glucosamine 1-phosphate + acetyl-CoA = N-acetyl-alpha-D-glucosamine 1-phosphate + CoA + H(+). It functions in the pathway nucleotide-sugar biosynthesis; UDP-N-acetyl-alpha-D-glucosamine biosynthesis; N-acetyl-alpha-D-glucosamine 1-phosphate from alpha-D-glucosamine 6-phosphate (route II): step 2/2. It participates in nucleotide-sugar biosynthesis; UDP-N-acetyl-alpha-D-glucosamine biosynthesis; UDP-N-acetyl-alpha-D-glucosamine from N-acetyl-alpha-D-glucosamine 1-phosphate: step 1/1. In terms of biological role, catalyzes the last two sequential reactions in the de novo biosynthetic pathway for UDP-N-acetyl-glucosamine (UDP-GlcNAc). Responsible for the acetylation of GlcN-1-P to GlcNAc-1-P, and for the uridyl transfer from UTP to GlcNAc-1-P, to produce UDP-GlcNAc and pyrophosphate. This Methanococcus maripaludis (strain C5 / ATCC BAA-1333) protein is Bifunctional protein GlmU.